Consider the following 931-residue polypeptide: Ribosome-releasing factor 2, mitochondrial (931 aa).

The tr-type G domain maps to 63–379 (EKTRNIGIIA…AVNNLLPGPS (317 aa)). GTP-binding positions include 72-79 (AHIDAGKT), 162-166 (DTPGH), and 216-219 (NKLD).

It belongs to the TRAFAC class translation factor GTPase superfamily. Classic translation factor GTPase family. EF-G/EF-2 subfamily.

Its subcellular location is the mitochondrion. In terms of biological role, mitochondrial GTPase that mediates the disassembly of ribosomes from messenger RNA at the termination of mitochondrial protein biosynthesis. Not involved in the GTP-dependent ribosomal translocation step during translation elongation. The polypeptide is Ribosome-releasing factor 2, mitochondrial (mef2) (Talaromyces stipitatus (strain ATCC 10500 / CBS 375.48 / QM 6759 / NRRL 1006) (Penicillium stipitatum)).